Reading from the N-terminus, the 155-residue chain is SsrA-binding protein (155 aa).

This sequence belongs to the SmpB family.

The protein localises to the cytoplasm. Required for rescue of stalled ribosomes mediated by trans-translation. Binds to transfer-messenger RNA (tmRNA), required for stable association of tmRNA with ribosomes. tmRNA and SmpB together mimic tRNA shape, replacing the anticodon stem-loop with SmpB. tmRNA is encoded by the ssrA gene; the 2 termini fold to resemble tRNA(Ala) and it encodes a 'tag peptide', a short internal open reading frame. During trans-translation Ala-aminoacylated tmRNA acts like a tRNA, entering the A-site of stalled ribosomes, displacing the stalled mRNA. The ribosome then switches to translate the ORF on the tmRNA; the nascent peptide is terminated with the 'tag peptide' encoded by the tmRNA and targeted for degradation. The ribosome is freed to recommence translation, which seems to be the essential function of trans-translation. This is SsrA-binding protein from Streptococcus agalactiae serotype Ia (strain ATCC 27591 / A909 / CDC SS700).